Consider the following 372-residue polypeptide: NAD(P)H-quinone oxidoreductase subunit 1 (372 aa).

A run of 8 helical transmembrane segments spans residues 27-47 (LLWL…GVLV), 97-117 (LLFT…WLII), 128-148 (VGIG…GLLM), 176-196 (LALA…IDIV), 204-224 (FLSW…ICAL), 270-290 (LLVS…ELIA), 308-328 (SLGI…AILL), and 351-371 (ISLV…FAFG).

This sequence belongs to the complex I subunit 1 family. NDH-1 is composed of at least 11 different subunits.

It is found in the cellular thylakoid membrane. The enzyme catalyses a plastoquinone + NADH + (n+1) H(+)(in) = a plastoquinol + NAD(+) + n H(+)(out). It carries out the reaction a plastoquinone + NADPH + (n+1) H(+)(in) = a plastoquinol + NADP(+) + n H(+)(out). In terms of biological role, NDH-1 shuttles electrons from an unknown electron donor, via FMN and iron-sulfur (Fe-S) centers, to quinones in the respiratory and/or the photosynthetic chain. The immediate electron acceptor for the enzyme in this species is believed to be plastoquinone. Couples the redox reaction to proton translocation, and thus conserves the redox energy in a proton gradient. In Prochlorococcus marinus (strain SARG / CCMP1375 / SS120), this protein is NAD(P)H-quinone oxidoreductase subunit 1.